We begin with the raw amino-acid sequence, 56 residues long: uncharacterized protein (56 aa).

This is an uncharacterized protein from Autographa californica nuclear polyhedrosis virus (AcMNPV).